Consider the following 303-residue polypeptide: Cytidine deaminase (303 aa).

CMP/dCMP-type deaminase domains lie at 57–172 (TDKE…YLPD) and 196–303 (ITED…IQVS). 98–100 (NQE) serves as a coordination point for substrate. Histidine 111 contacts Zn(2+). The Proton donor role is filled by glutamate 113. Zn(2+) is bound by residues cysteine 138 and cysteine 141.

The protein belongs to the cytidine and deoxycytidylate deaminase family. Homodimer. Requires Zn(2+) as cofactor.

The enzyme catalyses cytidine + H2O + H(+) = uridine + NH4(+). The catalysed reaction is 2'-deoxycytidine + H2O + H(+) = 2'-deoxyuridine + NH4(+). Functionally, this enzyme scavenges exogenous and endogenous cytidine and 2'-deoxycytidine for UMP synthesis. The sequence is that of Cytidine deaminase from Histophilus somni (strain 2336) (Haemophilus somnus).